We begin with the raw amino-acid sequence, 1393 residues long: DNA-directed RNA polymerase subunit beta' (1393 aa).

Positions 70, 72, 85, and 88 each coordinate Zn(2+). Mg(2+) is bound by residues D461, D463, and D465. Positions 804, 877, 884, and 887 each coordinate Zn(2+).

Belongs to the RNA polymerase beta' chain family. As to quaternary structure, the RNAP catalytic core consists of 2 alpha, 1 beta, 1 beta' and 1 omega subunit. When a sigma factor is associated with the core the holoenzyme is formed, which can initiate transcription. Mg(2+) serves as cofactor. Zn(2+) is required as a cofactor.

The enzyme catalyses RNA(n) + a ribonucleoside 5'-triphosphate = RNA(n+1) + diphosphate. DNA-dependent RNA polymerase catalyzes the transcription of DNA into RNA using the four ribonucleoside triphosphates as substrates. The polypeptide is DNA-directed RNA polymerase subunit beta' (Rhodospirillum rubrum (strain ATCC 11170 / ATH 1.1.1 / DSM 467 / LMG 4362 / NCIMB 8255 / S1)).